We begin with the raw amino-acid sequence, 338 residues long: Secretory carrier-associated membrane protein 1 (338 aa).

The disordered stretch occupies residues 1 to 63; sequence MSDFDSNPFA…PNVPSTQPAI (63 aa). Serine 2 carries the post-translational modification N-acetylserine. Serine 2 is subject to Phosphoserine. At 2–155 the chain is on the cytoplasmic side; that stretch reads SDFDSNPFAD…QKTVKIMYYL (154 aa). Threonine 45 is modified (phosphothreonine). The helical transmembrane segment at 156 to 176 threads the bilayer; sequence WMFHAVTLFLNIFGCLAWFCV. The Lumenal portion of the chain corresponds to 177-181; it reads DPSRG. The helical transmembrane segment at 182-202 threads the bilayer; it reads VDFGLSILWFLLFTPCSFVCW. Residues 203–217 are Cytoplasmic-facing; that stretch reads YRPLYGAFRSDSSFR. The helical transmembrane segment at 218–238 threads the bilayer; the sequence is FFVFFFVYICQFAVHVLQAAG. Topologically, residues 239 to 261 are lumenal; the sequence is FHNWGNCGWISSLTGLNQSIPVG. The chain crosses the membrane as a helical span at residues 262–282; sequence IMMIIIAALFTASAVISLVMF. Residues 283 to 338 lie on the Cytoplasmic side of the membrane; that stretch reads KKVHGLYRTTGASFEKAQQEFATGVMSNKTVQTAAANAASTAATSAAQNAFKGNQI.

The protein belongs to the SCAMP family. As to quaternary structure, interacts with SYNRG, ITSN1 and SLC9A7.

It localises to the golgi apparatus. It is found in the trans-Golgi network membrane. The protein localises to the recycling endosome membrane. Functionally, functions in post-Golgi recycling pathways. Acts as a recycling carrier to the cell surface. The sequence is that of Secretory carrier-associated membrane protein 1 (SCAMP1) from Sus scrofa (Pig).